The following is a 326-amino-acid chain: Vitamin B12 import system permease protein BtuC (326 aa).

Transmembrane regions (helical) follow at residues 19 to 39, 61 to 81, 88 to 108, 112 to 132, 146 to 166, 184 to 204, 240 to 260, 274 to 294, and 302 to 322; these read LSVL…LWIL, LAVL…QALF, PGLL…VLLG, LPNW…TLIL, LLAG…AIYF, GGVD…LLWI, GWMV…GLVI, VLLP…DIVA, and ELPI…WLLL.

Belongs to the binding-protein-dependent transport system permease family. FecCD subfamily. In terms of assembly, the complex is composed of two ATP-binding proteins (BtuD), two transmembrane proteins (BtuC) and a solute-binding protein (BtuF).

It localises to the cell inner membrane. Functionally, part of the ABC transporter complex BtuCDF involved in vitamin B12 import. Involved in the translocation of the substrate across the membrane. The chain is Vitamin B12 import system permease protein BtuC from Escherichia coli O127:H6 (strain E2348/69 / EPEC).